The following is a 1077-amino-acid chain: Teashirt homolog 1 (1077 aa).

3 disordered regions span residues 1–109 (MPRR…VSYP), 139–195 (SGST…SSSS), and 269–298 (GHYR…MEME). Positions 26 to 36 (IDEEHVEDDGL) are enriched in acidic residues. Composition is skewed to polar residues over residues 57–71 (QSYQ…TNQD) and 139–152 (SGST…SQKE). The segment covering 164 to 195 (PVSTTGPTTSTPSTSCSSSTSHSSTTSTSSSS) has biased composition (low complexity). 2 consecutive C2H2-type zinc fingers follow at residues 246–270 (FRCK…ETGH) and 307–331 (LKCM…KTKH). A compositionally biased stretch (basic and acidic residues) spans 269 to 284 (GHYRDDNRDKDSEKTK). The C2H2-type 3; atypical zinc finger occupies 416 to 440 (LKCMECGSSHDTLQQLTAHMMVTGH). Disordered stretches follow at residues 467–549 (SIPL…KGGL) and 647–720 (TGKV…EPLK). Composition is skewed to basic and acidic residues over residues 496–528 (SEEK…EKFE), 647–665 (TGKV…EKSS), and 675–708 (KENK…EGPL). S765 carries the phosphoserine modification. The segment at 848–873 (TGRLTPKSSTPSTVSEKSDADGSSFE) is disordered. Polar residues predominate over residues 853–862 (PKSSTPSTVS). Positions 885-955 (RKGRQSNWNP…NVKYQLRRTG (71 aa)) form a DNA-binding region, homeobox; atypical. 2 consecutive C2H2-type zinc fingers follow at residues 970–992 (FFCN…LETH) and 1037–1060 (FQCK…SKTH).

The protein belongs to the teashirt C2H2-type zinc-finger protein family. In terms of assembly, interacts (via homeobox domain) with APBB1 (via PID domain 1). As to expression, expressed in brain; strongly reduced in post-mortem elderly subjects with Alzheimer disease.

The protein localises to the nucleus. Its function is as follows. Probable transcriptional regulator involved in developmental processes. May act as a transcriptional repressor (Potential). In Homo sapiens (Human), this protein is Teashirt homolog 1 (TSHZ1).